The chain runs to 273 residues: NAD-dependent protein deacetylase 2 (273 aa).

The region spanning 1 to 273 (MSNAPLANQS…RCEAALAFLL (273 aa)) is the Deacetylase sirtuin-type domain. Residues 26-46 (GAGC…GNWK) and 104-107 (QNVD) contribute to the NAD(+) site. The Proton acceptor role is filled by H122. Residues C130, C133, C181, and C184 each coordinate Zn(2+). Residues 221–223 (GSS), 247–249 (NLG), and C265 each bind NAD(+).

The protein belongs to the sirtuin family. Class II subfamily. It depends on Zn(2+) as a cofactor.

The protein resides in the cytoplasm. The enzyme catalyses N(6)-acetyl-L-lysyl-[protein] + NAD(+) + H2O = 2''-O-acetyl-ADP-D-ribose + nicotinamide + L-lysyl-[protein]. In terms of biological role, NAD-dependent protein deacetylase which modulates the activities of several enzymes which are inactive in their acetylated form. The polypeptide is NAD-dependent protein deacetylase 2 (Bradyrhizobium diazoefficiens (strain JCM 10833 / BCRC 13528 / IAM 13628 / NBRC 14792 / USDA 110)).